The sequence spans 420 residues: uncharacterized protein (420 aa).

The next 6 membrane-spanning stretches (helical) occupy residues 26–46, 66–86, 231–251, 276–296, 317–337, and 369–389; these read IFLLLVILVFVPIGFVFQSVI, SAIKSITLLFLLLLFVNWFTF, VILAFYVTQKILIMILFATVL, IPVNVFAMTIAIAIRFVPSLL, GFLVKMRSLSSLVVPMVSIAF, and IDILALFLVFAWFVVIIFLTI.

This sequence belongs to the CbiQ family.

Its subcellular location is the cell membrane. This is an uncharacterized protein from Mycoplasma genitalium (strain ATCC 33530 / DSM 19775 / NCTC 10195 / G37) (Mycoplasmoides genitalium).